Here is a 424-residue protein sequence, read N- to C-terminus: Enolase (424 aa).

Gln-163 lines the (2R)-2-phosphoglycerate pocket. The active-site Proton donor is the Glu-205. Residues Asp-242, Glu-285, and Asp-312 each coordinate Mg(2+). Residues Lys-337, Arg-366, Ser-367, and Lys-388 each coordinate (2R)-2-phosphoglycerate. Catalysis depends on Lys-337, which acts as the Proton acceptor.

This sequence belongs to the enolase family. It depends on Mg(2+) as a cofactor.

It is found in the cytoplasm. It localises to the secreted. The protein localises to the cell surface. It carries out the reaction (2R)-2-phosphoglycerate = phosphoenolpyruvate + H2O. It functions in the pathway carbohydrate degradation; glycolysis; pyruvate from D-glyceraldehyde 3-phosphate: step 4/5. Catalyzes the reversible conversion of 2-phosphoglycerate (2-PG) into phosphoenolpyruvate (PEP). It is essential for the degradation of carbohydrates via glycolysis. The sequence is that of Enolase from Sphingopyxis alaskensis (strain DSM 13593 / LMG 18877 / RB2256) (Sphingomonas alaskensis).